Consider the following 118-residue polypeptide: Ribonuclease P protein component (118 aa).

Belongs to the RnpA family. As to quaternary structure, consists of a catalytic RNA component (M1 or rnpB) and a protein subunit.

The catalysed reaction is Endonucleolytic cleavage of RNA, removing 5'-extranucleotides from tRNA precursor.. RNaseP catalyzes the removal of the 5'-leader sequence from pre-tRNA to produce the mature 5'-terminus. It can also cleave other RNA substrates such as 4.5S RNA. The protein component plays an auxiliary but essential role in vivo by binding to the 5'-leader sequence and broadening the substrate specificity of the ribozyme. The polypeptide is Ribonuclease P protein component (Mycoplasma pneumoniae (strain ATCC 29342 / M129 / Subtype 1) (Mycoplasmoides pneumoniae)).